A 729-amino-acid polypeptide reads, in one-letter code: Polyribonucleotide nucleotidyltransferase (729 aa).

Positions 516 and 522 each coordinate Mg(2+). Residues proline 581 to isoleucine 641 form the KH domain. In terms of domain architecture, S1 motif spans glycine 658–proline 725.

It belongs to the polyribonucleotide nucleotidyltransferase family. Mg(2+) is required as a cofactor.

Its subcellular location is the cytoplasm. It carries out the reaction RNA(n+1) + phosphate = RNA(n) + a ribonucleoside 5'-diphosphate. Involved in mRNA degradation. Catalyzes the phosphorolysis of single-stranded polyribonucleotides processively in the 3'- to 5'-direction. This is Polyribonucleotide nucleotidyltransferase from Sulfurovum sp. (strain NBC37-1).